A 103-amino-acid polypeptide reads, in one-letter code: Large ribosomal subunit protein bL21 (103 aa).

The protein belongs to the bacterial ribosomal protein bL21 family. Part of the 50S ribosomal subunit. Contacts protein L20.

Functionally, this protein binds to 23S rRNA in the presence of protein L20. In Lactobacillus johnsonii (strain CNCM I-12250 / La1 / NCC 533), this protein is Large ribosomal subunit protein bL21.